Here is a 292-residue protein sequence, read N- to C-terminus: tRNA dimethylallyltransferase (292 aa).

Residue 10-17 coordinates ATP; sequence GPTASGKS. 12–17 is a binding site for substrate; sequence TASGKS. Interaction with substrate tRNA regions lie at residues 35–38 and 159–163; these read DSMQ and QRIVR.

Belongs to the IPP transferase family. As to quaternary structure, monomer. Mg(2+) serves as cofactor.

It catalyses the reaction adenosine(37) in tRNA + dimethylallyl diphosphate = N(6)-dimethylallyladenosine(37) in tRNA + diphosphate. Catalyzes the transfer of a dimethylallyl group onto the adenine at position 37 in tRNAs that read codons beginning with uridine, leading to the formation of N6-(dimethylallyl)adenosine (i(6)A). This Chelativorans sp. (strain BNC1) protein is tRNA dimethylallyltransferase.